The following is a 454-amino-acid chain: Innexin-19 (454 aa).

At 1 to 48 (MWRTPASTGPLRQDRQMFFHATLARSFINALSVRGDDDAVDRLNYYYT) the chain is on the cytoplasmic side. Residues 49–69 (PLILAVCCLVISAKQYGGTPI) form a helical membrane-spanning segment. Topologically, residues 70–118 (ECWVNPHSRESMEEYIESYCWIQNTYWIPMYENVPDDHTAREEKQIGYY) are extracellular. The helical transmembrane segment at 119 to 139 (QWVPFILIAEALMFSLPCIFW) threads the bilayer. Over 140-214 (RLCSFQSGLN…SRFLSGQCLS (75 aa)) the chain is Cytoplasmic. A helical transmembrane segment spans residues 215–235 (ILHSFTKLLYSMNVVAQFLIL). Over 236-300 (NACLKSSDFL…ALLINIINEK (65 aa)) the chain is Extracellular. A helical transmembrane segment spans residues 301 to 321 (VFAFLWCWYMILAIITTCSFI). At 322-454 (YWIANSFIHS…SNPGQTKSFL (133 aa)) the chain is on the cytoplasmic side.

This sequence belongs to the pannexin family. Specifically expressed in sensory neurons and interneurons in the head and tail. Expressed in neurons AWC, ASH, AFD, ASI, ADL, ASK, BAG, AWB, and ADF (head sensory neurons); ADA, AIZ, RIC, AIY, and AIM (head interneurons); PHA and PHB (tail sensory neurons); and PVC and PVQ (tail interneurons).

It is found in the cell membrane. The protein localises to the cell junction. It localises to the gap junction. In terms of biological role, structural component of the gap junctions that specifically coordinates left-right asymmetry in the developing nervous system. Acts by forming gap junction network linking embryonic neurons and providing electrical coupling between cells, leading to promote or inhibit AWC signaling. Required for the left and right AWC olfactory neurons to establish asymmetric patterns of gene expression during embryogenesis. Acts autonomously. This is Innexin-19 (inx-19) from Caenorhabditis elegans.